We begin with the raw amino-acid sequence, 306 residues long: tRNA dimethylallyltransferase 1 (306 aa).

Position 15–22 (15–22) interacts with ATP; sequence GPTGSGKS. A substrate-binding site is contributed by 17-22; the sequence is TGSGKS. The tract at residues 40–43 is interaction with substrate tRNA; that stretch reads DSMQ.

It belongs to the IPP transferase family. Monomer. Requires Mg(2+) as cofactor.

It catalyses the reaction adenosine(37) in tRNA + dimethylallyl diphosphate = N(6)-dimethylallyladenosine(37) in tRNA + diphosphate. Functionally, catalyzes the transfer of a dimethylallyl group onto the adenine at position 37 in tRNAs that read codons beginning with uridine, leading to the formation of N6-(dimethylallyl)adenosine (i(6)A). This Citrifermentans bemidjiense (strain ATCC BAA-1014 / DSM 16622 / JCM 12645 / Bem) (Geobacter bemidjiensis) protein is tRNA dimethylallyltransferase 1.